The following is a 145-amino-acid chain: Transthyretin (145 aa).

The first 20 residues, 1 to 20 (MASHRLFLLCLAGLVFMSEA), serve as a signal peptide directing secretion. Cysteine 28 carries the sulfocysteine modification. Lysine 33 lines the L-thyroxine pocket. Residue glutamate 60 is modified to 4-carboxyglutamate. Position 70 is a phosphoserine (serine 70). An L-thyroxine-binding site is contributed by glutamate 72. A glycan (N-linked (GlcNAc...) asparagine) is linked at asparagine 116. Serine 135 provides a ligand contact to L-thyroxine.

The protein belongs to the transthyretin family. In terms of assembly, homotetramer. Dimer of dimers. In the homotetramer, subunits assemble around a central channel that can accommodate two ligand molecules. Interacts with RBP4. Sulfonation of the reactive cysteine Cys-28 enhances the stability of the native conformation of TTR, avoiding misassembly of the protein leading to amyloid formation.

The protein resides in the secreted. Its function is as follows. Thyroid hormone-binding protein. Probably transports thyroxine from the bloodstream to the brain. This chain is Transthyretin (TTR), found in Erinaceus europaeus (Western European hedgehog).